The sequence spans 233 residues: Large ribosomal subunit protein uL1 (233 aa).

This sequence belongs to the universal ribosomal protein uL1 family. As to quaternary structure, part of the 50S ribosomal subunit.

In terms of biological role, binds directly to 23S rRNA. The L1 stalk is quite mobile in the ribosome, and is involved in E site tRNA release. Functionally, protein L1 is also a translational repressor protein, it controls the translation of the L11 operon by binding to its mRNA. The sequence is that of Large ribosomal subunit protein uL1 from Laribacter hongkongensis (strain HLHK9).